Consider the following 429-residue polypeptide: Violacein synthase (429 aa).

Residue 3 to 21 (RAIIVGGGLAGGLTAIYLA) participates in FAD binding.

FAD serves as cofactor.

The catalysed reaction is protoviolaceinate + NADPH + O2 + H(+) = violaceinate + NADP(+) + H2O. It catalyses the reaction protoviolaceinate + NADH + O2 + H(+) = violaceinate + NAD(+) + H2O. It carries out the reaction protodeoxyviolaceinate + NADPH + O2 + H(+) = deoxyviolaceinate + NADP(+) + H2O. The enzyme catalyses protodeoxyviolaceinate + NADH + O2 + H(+) = deoxyviolaceinate + NAD(+) + H2O. Its pathway is pigment biosynthesis; violacein biosynthesis. Functionally, catalyzes the hydroxylation of the 16-position of protoviolaceinate and protodeoxyviolaceinate to form violacein and deoxyviolacein, respectively. The protein is Violacein synthase (vioC) of Chromobacterium violaceum (strain ATCC 12472 / DSM 30191 / JCM 1249 / CCUG 213 / NBRC 12614 / NCIMB 9131 / NCTC 9757 / MK).